Here is a 482-residue protein sequence, read N- to C-terminus: Nucleoside triphosphate pyrophosphatase/Nudix hydrolase fusion protein (482 aa).

Residues 1–299 form a maf-like region; sequence MSIPLILASK…DLWNVGRGEL (299 aa). Asp-167 (proton acceptor) is an active-site residue. In terms of domain architecture, Nudix hydrolase spans 338 to 475; sequence GTNGASGILL…TDWPRFAARL (138 aa).

The protein in the N-terminal section; belongs to the Maf family. Requires a divalent metal cation as cofactor.

It is found in the cytoplasm. It carries out the reaction a ribonucleoside 5'-triphosphate + H2O = a ribonucleoside 5'-phosphate + diphosphate + H(+). It catalyses the reaction a 2'-deoxyribonucleoside 5'-triphosphate + H2O = a 2'-deoxyribonucleoside 5'-phosphate + diphosphate + H(+). Functionally, nucleoside triphosphate pyrophosphatase. May have a dual role in cell division arrest and in preventing the incorporation of modified nucleotides into cellular nucleic acids. In Bifidobacterium longum (strain NCC 2705), this protein is Nucleoside triphosphate pyrophosphatase/Nudix hydrolase fusion protein.